The chain runs to 152 residues: Transcriptional regulator MraZ (152 aa).

SpoVT-AbrB domains are found at residues 5–52 (ATLV…PLPE) and 81–124 (ASEC…DEQT).

The protein belongs to the MraZ family. Forms oligomers.

It localises to the cytoplasm. Its subcellular location is the nucleoid. Negatively regulates its own expression and that of the subsequent genes in the proximal part of the division and cell wall (dcw) gene cluster. Acts by binding directly to DNA. May also regulate the expression of genes outside the dcw cluster. In Erwinia tasmaniensis (strain DSM 17950 / CFBP 7177 / CIP 109463 / NCPPB 4357 / Et1/99), this protein is Transcriptional regulator MraZ.